The sequence spans 23 residues: Potassium channel toxin kappa-KTx 2.3 (23 aa).

2 disulfide bridges follow: Cys4-Cys22 and Cys8-Cys18.

This sequence belongs to the short scorpion toxin superfamily. Potassium channel inhibitor kappa-KTx family. Kappa-KTx 2 subfamily. Expressed by the venom gland.

It localises to the secreted. In terms of biological role, decreases the amplitude of the potassium current of the rat channels Kv1.1/KCNA1 by 33% and Kv1.2/KCNA2 by 8% as well as human Kv1.3/KCNA3 by 70%. In Opisthacanthus madagascariensis (Scorpion), this protein is Potassium channel toxin kappa-KTx 2.3.